We begin with the raw amino-acid sequence, 398 residues long: Endoglucanase (398 aa).

Positions 1-23 (MSPLKCMALAALGAVMFVGSAQA) are cleaved as a signal peptide. Residue E58 is the Proton donor of the active site. D119 serves as the catalytic Nucleophile.

This sequence belongs to the glycosyl hydrolase 8 (cellulase D) family.

Its subcellular location is the secreted. The enzyme catalyses Endohydrolysis of (1-&gt;4)-beta-D-glucosidic linkages in cellulose, lichenin and cereal beta-D-glucans.. It functions in the pathway glycan metabolism; bacterial cellulose biosynthesis. Hydrolyzes carboxymethylcellulose. This Pseudomonas fluorescens (strain SBW25) protein is Endoglucanase (bcsZ).